The chain runs to 729 residues: MSKFIEPSVEEIKLEKVYQDMGLSDQEYEKVCDILGRQPNFTETGIFSVMWSEHCSYKHSKPFLKQFPTSGEHVLMGPGEGAGVVDIGDNQAVVFKVESHNHPSAIEPYQGAATGVGGIIRDIVSIGARPINLLNSLRFGELDNKQNQRLLKGVVKGIGGYGNCIGIPTTAGEIEFDERYDGNPLVNAMCVGVINHDMIQKGTAKGVGNSVIYVGLKTGRDGIHGATFASEELTEESESKRPSVQIGDPFVGKKLMEATLEAITFDELVGIQDMGAAGLTSSSSEMAAKGGSGLHLRLEQVPTREPGISPYEMMLSETQERMLLVVEKGNEQKFLDLFDKHELDSAVIGEVTDTNRFVLTYDDEVYADIPVEPLADEAPVYILEGEEKDYNTSKNDYTHIDVKDTFFKLLKHPTIASKHYLYDQYDQQVGANTIIKPGLQASVVRVEGTNKAIASTIDGEARYVYNNPYEGGKMVVAEAYRNLIAVGATPLAMTDCLNYGSPEKKEIYQQLIDSTKGMAEACDILKTPVVSGNVSLYNETKGTSIFPTPVVGMVGLIENVNYLNDFEPQVGDKLYLIGDTKDDFGGSQLEKLIYGKVNHEFESLDLSSEVEKGESIKTAIREGLLSHVQTVGKGGLLITLAKLSAHYGLGLKSSIDITNAQLFSETQGRYVVSVKSGKTLNIDNAIEIGLLTDSDNFKVTTPYTEISENVSDIKQIWEGAIAQCLTTQD.

Residue His-54 is part of the active site. The ATP site is built by Tyr-57 and Lys-96. Glu-98 provides a ligand contact to Mg(2+). Residues 99–102 (SHNH) and Arg-121 contribute to the substrate site. His-100 acts as the Proton acceptor in catalysis. Mg(2+) is bound at residue Asp-122. Gln-245 is a substrate binding site. Asp-273 contacts Mg(2+). A substrate-binding site is contributed by 317–319 (ETQ). 2 residues coordinate ATP: Asp-495 and Gly-532. Asn-533 is a binding site for Mg(2+). Residue Ser-535 coordinates substrate.

Belongs to the FGAMS family. As to quaternary structure, monomer. Part of the FGAM synthase complex composed of 1 PurL, 1 PurQ and 2 PurS subunits.

The protein resides in the cytoplasm. The enzyme catalyses N(2)-formyl-N(1)-(5-phospho-beta-D-ribosyl)glycinamide + L-glutamine + ATP + H2O = 2-formamido-N(1)-(5-O-phospho-beta-D-ribosyl)acetamidine + L-glutamate + ADP + phosphate + H(+). It functions in the pathway purine metabolism; IMP biosynthesis via de novo pathway; 5-amino-1-(5-phospho-D-ribosyl)imidazole from N(2)-formyl-N(1)-(5-phospho-D-ribosyl)glycinamide: step 1/2. Its function is as follows. Part of the phosphoribosylformylglycinamidine synthase complex involved in the purines biosynthetic pathway. Catalyzes the ATP-dependent conversion of formylglycinamide ribonucleotide (FGAR) and glutamine to yield formylglycinamidine ribonucleotide (FGAM) and glutamate. The FGAM synthase complex is composed of three subunits. PurQ produces an ammonia molecule by converting glutamine to glutamate. PurL transfers the ammonia molecule to FGAR to form FGAM in an ATP-dependent manner. PurS interacts with PurQ and PurL and is thought to assist in the transfer of the ammonia molecule from PurQ to PurL. The chain is Phosphoribosylformylglycinamidine synthase subunit PurL from Staphylococcus aureus (strain Mu3 / ATCC 700698).